The chain runs to 190 residues: Small ribosomal subunit protein eS7x (190 aa).

Met1 is subject to N-acetylmethionine. A coiled-coil region spans residues 17–50 (TECEEQVAQALFDLENTNQELKSELKDLYINQAV).

It belongs to the eukaryotic ribosomal protein eS7 family.

The sequence is that of Small ribosomal subunit protein eS7x (RPS7C) from Arabidopsis thaliana (Mouse-ear cress).